A 351-amino-acid polypeptide reads, in one-letter code: UDP-N-acetylglucosamine--N-acetylmuramyl-(pentapeptide) pyrophosphoryl-undecaprenol N-acetylglucosamine transferase (351 aa).

Residues 11–13, N120, R161, S187, and Q281 contribute to the UDP-N-acetyl-alpha-D-glucosamine site; that span reads TGG.

The protein belongs to the glycosyltransferase 28 family. MurG subfamily.

It localises to the cell inner membrane. The enzyme catalyses di-trans,octa-cis-undecaprenyl diphospho-N-acetyl-alpha-D-muramoyl-L-alanyl-D-glutamyl-meso-2,6-diaminopimeloyl-D-alanyl-D-alanine + UDP-N-acetyl-alpha-D-glucosamine = di-trans,octa-cis-undecaprenyl diphospho-[N-acetyl-alpha-D-glucosaminyl-(1-&gt;4)]-N-acetyl-alpha-D-muramoyl-L-alanyl-D-glutamyl-meso-2,6-diaminopimeloyl-D-alanyl-D-alanine + UDP + H(+). The protein operates within cell wall biogenesis; peptidoglycan biosynthesis. Functionally, cell wall formation. Catalyzes the transfer of a GlcNAc subunit on undecaprenyl-pyrophosphoryl-MurNAc-pentapeptide (lipid intermediate I) to form undecaprenyl-pyrophosphoryl-MurNAc-(pentapeptide)GlcNAc (lipid intermediate II). The chain is UDP-N-acetylglucosamine--N-acetylmuramyl-(pentapeptide) pyrophosphoryl-undecaprenol N-acetylglucosamine transferase from Rippkaea orientalis (strain PCC 8801 / RF-1) (Cyanothece sp. (strain PCC 8801)).